The following is a 453-amino-acid chain: Bifunctional protein GlmU (453 aa).

The tract at residues 1-231 (MERTCLAVIL…EIEMTGCNTR (231 aa)) is pyrophosphorylase. UDP-N-acetyl-alpha-D-glucosamine-binding positions include 10 to 13 (LAAG), Lys-24, Gln-77, 82 to 83 (GT), 105 to 107 (YGD), Gly-143, Glu-157, Asn-172, and Asn-229. Position 107 (Asp-107) interacts with Mg(2+). Asn-229 is a binding site for Mg(2+). Residues 232-252 (AELAVIERFWQERRRHQMMLS) form a linker region. Residues 253 to 453 (GVTMIAPETV…AIKAAKKAKA (201 aa)) are N-acetyltransferase. 2 residues coordinate UDP-N-acetyl-alpha-D-glucosamine: Arg-318 and Lys-336. His-348 (proton acceptor) is an active-site residue. 2 residues coordinate UDP-N-acetyl-alpha-D-glucosamine: Tyr-351 and Asn-362. Acetyl-CoA-binding positions include Ala-365, 371–372 (NY), Ser-390, Ser-408, and Arg-425.

In the N-terminal section; belongs to the N-acetylglucosamine-1-phosphate uridyltransferase family. It in the C-terminal section; belongs to the transferase hexapeptide repeat family. In terms of assembly, homotrimer. The cofactor is Mg(2+).

The protein resides in the cytoplasm. It carries out the reaction alpha-D-glucosamine 1-phosphate + acetyl-CoA = N-acetyl-alpha-D-glucosamine 1-phosphate + CoA + H(+). The catalysed reaction is N-acetyl-alpha-D-glucosamine 1-phosphate + UTP + H(+) = UDP-N-acetyl-alpha-D-glucosamine + diphosphate. The protein operates within nucleotide-sugar biosynthesis; UDP-N-acetyl-alpha-D-glucosamine biosynthesis; N-acetyl-alpha-D-glucosamine 1-phosphate from alpha-D-glucosamine 6-phosphate (route II): step 2/2. It functions in the pathway nucleotide-sugar biosynthesis; UDP-N-acetyl-alpha-D-glucosamine biosynthesis; UDP-N-acetyl-alpha-D-glucosamine from N-acetyl-alpha-D-glucosamine 1-phosphate: step 1/1. It participates in bacterial outer membrane biogenesis; LPS lipid A biosynthesis. In terms of biological role, catalyzes the last two sequential reactions in the de novo biosynthetic pathway for UDP-N-acetylglucosamine (UDP-GlcNAc). The C-terminal domain catalyzes the transfer of acetyl group from acetyl coenzyme A to glucosamine-1-phosphate (GlcN-1-P) to produce N-acetylglucosamine-1-phosphate (GlcNAc-1-P), which is converted into UDP-GlcNAc by the transfer of uridine 5-monophosphate (from uridine 5-triphosphate), a reaction catalyzed by the N-terminal domain. This is Bifunctional protein GlmU from Rhizobium johnstonii (strain DSM 114642 / LMG 32736 / 3841) (Rhizobium leguminosarum bv. viciae).